The sequence spans 201 residues: Small ribosomal subunit protein uS4 (201 aa).

The interval 1-45 is disordered; the sequence is MARYTGPLTKKSRRLGTDLVGNDKSFERRPYPPGVHGRGRTKDSE. The 67-residue stretch at 91–157 folds into the S4 RNA-binding domain; that stretch reads SRLDNVVYRA…PPIVIARETF (67 aa).

Belongs to the universal ribosomal protein uS4 family. In terms of assembly, part of the 30S ribosomal subunit. Contacts protein S5. The interaction surface between S4 and S5 is involved in control of translational fidelity.

Functionally, one of the primary rRNA binding proteins, it binds directly to 16S rRNA where it nucleates assembly of the body of the 30S subunit. Its function is as follows. With S5 and S12 plays an important role in translational accuracy. In Cutibacterium acnes (strain DSM 16379 / KPA171202) (Propionibacterium acnes), this protein is Small ribosomal subunit protein uS4.